A 635-amino-acid chain; its full sequence is Replication factor C small subunit (635 aa).

Residue 51-58 (GPPGTGKT) coordinates ATP.

Belongs to the activator 1 small subunits family. RfcS subfamily. Heteromultimer composed of small subunits (RfcS) and large subunits (RfcL). This protein undergoes a protein self splicing that involves a post-translational excision of the intervening region (intein) followed by peptide ligation.

Its function is as follows. Part of the RFC clamp loader complex which loads the PCNA sliding clamp onto DNA. The polypeptide is Replication factor C small subunit (rfcS) (Methanopyrus kandleri (strain AV19 / DSM 6324 / JCM 9639 / NBRC 100938)).